The following is a 622-amino-acid chain: Chaperone protein HscA homolog (622 aa).

Belongs to the heat shock protein 70 family.

Functionally, chaperone involved in the maturation of iron-sulfur cluster-containing proteins. Has a low intrinsic ATPase activity which is markedly stimulated by HscB. This Acidovorax sp. (strain JS42) protein is Chaperone protein HscA homolog.